The following is a 314-amino-acid chain: A-kinase anchor protein 7 isoform gamma (314 aa).

Positions 1–46 are disordered; sequence MPFAAVDIQDDCGSPDVPQANPKRSKEEEEDRGDKNDHVKKRKKAK. Over residues 24–37 the composition is skewed to basic and acidic residues; it reads RSKEEEEDRGDKND. AMP is bound by residues Thr95 and 185–187; that span reads HLT. CMP contacts are provided by residues Thr95 and 185-187; that span reads HLT. Residues 260-314 form a PKA-RII-alpha subunit binding domain region; sequence AELVRLSKRLVENAVLKAVQQYLEETQNKKQPGEGNSTKAEEGDRNGDGSDNNRK. Residues 261 to 285 are RI-alpha-binding; the sequence is ELVRLSKRLVENAVLKAVQQYLEET. The interval 262–275 is RII-binding; sequence LVRLSKRLVENAVL. The interval 281 to 314 is disordered; the sequence is YLEETQNKKQPGEGNSTKAEEGDRNGDGSDNNRK. Over residues 298 to 314 the composition is skewed to basic and acidic residues; sequence KAEEGDRNGDGSDNNRK.

As to quaternary structure, binds cAMP-dependent protein kinase (PKA). Interacts with PRKCA; only the cytoplasmic form is capable of interacting with PRKCA. As to expression, expressed in oocytes.

The protein localises to the nucleus. The protein resides in the cytoplasm. Its function is as follows. Probably targets cAMP-dependent protein kinase (PKA) to the cellular membrane or cytoskeletal structures. The membrane-associated form reduces epithelial sodium channel (ENaC) activity, whereas the free cytoplasmic form may negatively regulate ENaC channel feedback inhibition by intracellular sodium. The chain is A-kinase anchor protein 7 isoform gamma from Mus musculus (Mouse).